The following is a 97-amino-acid chain: DNA-binding protein HU (97 aa).

Belongs to the bacterial histone-like protein family. Has been isolated in complexes with 5S rRNA and bL25, and with 5S rRNA, bL25 and uL5. Homodimer.

Histone-like DNA-binding protein which is capable of wrapping DNA to stabilize it, and thus to prevent its denaturation under extreme environmental conditions. In Thermus thermophilus (strain ATCC 27634 / DSM 579 / HB8), this protein is DNA-binding protein HU.